The chain runs to 928 residues: DNA-binding protein RFX6 (928 aa).

Disordered regions lie at residues 1 to 22 (MAKV…QVSP) and 53 to 102 (PGGA…AADL). A compositionally biased stretch (basic and acidic residues) spans 92 to 101 (SHDSKTKAAD). The RFX-type winged-helix DNA-binding region spans 124–199 (TLQWLEENYI…YHYYGIGIKE (76 aa)).

The protein belongs to the RFX family. In terms of assembly, interacts with RFX3.

Its subcellular location is the nucleus. Its function is as follows. Transcription factor required to direct islet cell differentiation during endocrine pancreas development. Specifically required for the differentiation of 4 of the 5 islet cell types and for the production of insulin. Not required for pancreatic PP (polypeptide-producing) cells differentiation. Acts downstream of NEUROG3 and regulates the transcription factors involved in beta-cell maturation and function, thereby restricting the expression of the beta-cell differentiation and specification genes, and thus the beta-cell fate choice. Activates transcription by forming a heterodimer with RFX3 and binding to the X-box in the promoter of target genes. Involved in glucose-stimulated insulin secretion by promoting insulin and L-type calcium channel gene transcription. This chain is DNA-binding protein RFX6 (RFX6), found in Ailuropoda melanoleuca (Giant panda).